Consider the following 91-residue polypeptide: Early E3B 10.4 kDa protein (91 aa).

The first 22 residues, 1-22 (MIPRNFFFTILICPFNVCATFT), serve as a signal peptide directing secretion. The Lumenal portion of the chain corresponds to 23 to 34 (AVATASPDCIGP). Residues 35 to 60 (FASYALFAFVTCICVCSIVCLVINFF) form a helical membrane-spanning segment. Residues 61–91 (QLVDWIFVRIAYLRHHPEYRNQNVAALLRLI) lie on the Cytoplasmic side of the membrane.

The protein belongs to the adenoviridae E3B family.

It is found in the host endoplasmic reticulum membrane. Functionally, down-regulates the EGF receptor. This chain is Early E3B 10.4 kDa protein, found in Human adenovirus B serotype 3 (HAdV-3).